A 267-amino-acid polypeptide reads, in one-letter code: Small ribosomal subunit protein uS2 (267 aa).

The tract at residues 224 to 267 (GRQGEDQVDEKTFEGQKSEAAEGDKKTADNSMEDIVNAVEGDNK) is disordered. The span at 225-251 (RQGEDQVDEKTFEGQKSEAAEGDKKTA) shows a compositional bias: basic and acidic residues.

The protein belongs to the universal ribosomal protein uS2 family.

This chain is Small ribosomal subunit protein uS2, found in Levilactobacillus brevis (strain ATCC 367 / BCRC 12310 / CIP 105137 / JCM 1170 / LMG 11437 / NCIMB 947 / NCTC 947) (Lactobacillus brevis).